The sequence spans 101 residues: Cysteine-rich and transmembrane domain-containing protein B (101 aa).

The interval 1 to 80 (MSQQPPAVGV…PQQQQQQKHS (80 aa)) is disordered. The segment covering 24-43 (DAYPPPGQPYPQQGYPPPQG) has biased composition (pro residues). Over residues 59–77 (YPEQGYPQQGYPPQQQQQQ) the composition is skewed to low complexity. Residues 78 to 95 (KHSPGMLEGCIAALCCYC) traverse the membrane as a helical segment.

It belongs to the CYSTM1 family.

It localises to the membrane. This Arabidopsis thaliana (Mouse-ear cress) protein is Cysteine-rich and transmembrane domain-containing protein B.